The sequence spans 912 residues: Ubiquitin carboxyl-terminal hydrolase 3 (912 aa).

The span at 1 to 11 (MNMQDANKEES) shows a compositional bias: basic and acidic residues. Disordered stretches follow at residues 1–30 (MNMQ…TNMQ), 68–176 (IYHQ…SYSS), 241–384 (NSSV…TTAG), and 396–417 (GKSS…YVPP). Low complexity-rich tracts occupy residues 82–95 (NNIN…NNNI), 102–140 (SNGI…SNNH), and 159–176 (TNSS…SYSS). The span at 249 to 259 (AHHHTKSHSIP) shows a compositional bias: basic residues. Residues 260–310 (KHNEEVKTETHGEEEDAHDKKPHASKDAHELKKKTEVKKEDAKQDRNEKVI) show a composition bias toward basic and acidic residues. The segment covering 335–355 (SKTSSPSPSPPAAKSWSAIAS) has biased composition (low complexity). Polar residues-rich tracts occupy residues 361–384 (RQAS…TTAG) and 396–406 (GKSSSPLLSKQ). The 452-residue stretch at 460-911 (RGIINRANIC…TAYILMYQKR (452 aa)) folds into the USP domain. C469 functions as the Nucleophile in the catalytic mechanism. H861 acts as the Proton acceptor in catalysis.

The protein belongs to the peptidase C19 family. As to quaternary structure, heterotetramer with BRE5; contains two molecules of BRE5 and two molecules of UBP3. Forms a complex composed of CDC48, DOA1, deubiquitinase UBP3 and probably BRE5. Within the complex interacts directly with DOA1 and CDC48 in a BRE5-independent manner.

The catalysed reaction is Thiol-dependent hydrolysis of ester, thioester, amide, peptide and isopeptide bonds formed by the C-terminal Gly of ubiquitin (a 76-residue protein attached to proteins as an intracellular targeting signal).. In terms of biological role, has an ATP-independent isopeptidase activity, cleaving at the C-terminus of the ubiquitin moiety in natural or engineered linear fusion proteins, irrespective of their size or the presence of an N-terminal extension to ubiquitin. Plays a role in regulation of silencing by interacting with SIR4. Also, in conjunction with BRE5, cleaves ubiquitin, leading to the subsequent mono-ubiquitination of SEC23. Required for ribophagy, a process which relocalizes ribosomal particles into the vacuole for degradation in response to starvation. This chain is Ubiquitin carboxyl-terminal hydrolase 3 (UBP3), found in Saccharomyces cerevisiae (strain ATCC 204508 / S288c) (Baker's yeast).